Consider the following 134-residue polypeptide: uncharacterized protein (134 aa).

The N-terminal stretch at 1–37 (MSYIKRDHTALRDIAMKTFLKVVGLAASLSAASVAFS) is a signal peptide.

This is an uncharacterized protein from Coxiella burnetii (strain RSA 493 / Nine Mile phase I).